The sequence spans 452 residues: Methionine aminopeptidase 2 (452 aa).

The interval 1–91 (MTGVTGTEDT…KNKKKKKKKI (91 aa)) is disordered. Basic and acidic residues predominate over residues 8–38 (EDTKVIESKINELNIDKSKPEKTNKVNKSDD). Over residues 39–62 (VDNDDVDNDDNDDEDNDDDDDEIT) the composition is skewed to acidic residues. The span at 74 to 91 (KKKKKNKNKNKKKKKKKI) shows a compositional bias: basic residues. Residue H203 participates in substrate binding. D223, D234, and H305 together coordinate a divalent metal cation. Residue H313 participates in substrate binding. 2 residues coordinate a divalent metal cation: E338 and E433.

This sequence belongs to the peptidase M24A family. Methionine aminopeptidase eukaryotic type 2 subfamily. The cofactor is Co(2+). It depends on Zn(2+) as a cofactor. Mn(2+) serves as cofactor. Fe(2+) is required as a cofactor.

Its subcellular location is the cytoplasm. The enzyme catalyses Release of N-terminal amino acids, preferentially methionine, from peptides and arylamides.. Functionally, cotranslationally removes the N-terminal methionine from nascent proteins. The N-terminal methionine is often cleaved when the second residue in the primary sequence is small and uncharged (Met-Ala-, Cys, Gly, Pro, Ser, Thr, or Val). The chain is Methionine aminopeptidase 2 from Candida dubliniensis (strain CD36 / ATCC MYA-646 / CBS 7987 / NCPF 3949 / NRRL Y-17841) (Yeast).